The sequence spans 202 residues: ATP-dependent Clp protease proteolytic subunit (202 aa).

The Nucleophile role is filled by Ser-106. The active site involves His-131.

Belongs to the peptidase S14 family. In terms of assembly, fourteen ClpP subunits assemble into 2 heptameric rings which stack back to back to give a disk-like structure with a central cavity, resembling the structure of eukaryotic proteasomes.

It localises to the cytoplasm. The catalysed reaction is Hydrolysis of proteins to small peptides in the presence of ATP and magnesium. alpha-casein is the usual test substrate. In the absence of ATP, only oligopeptides shorter than five residues are hydrolyzed (such as succinyl-Leu-Tyr-|-NHMec, and Leu-Tyr-Leu-|-Tyr-Trp, in which cleavage of the -Tyr-|-Leu- and -Tyr-|-Trp bonds also occurs).. Cleaves peptides in various proteins in a process that requires ATP hydrolysis. Has a chymotrypsin-like activity. Plays a major role in the degradation of misfolded proteins. The sequence is that of ATP-dependent Clp protease proteolytic subunit from Shewanella baltica (strain OS223).